Reading from the N-terminus, the 2068-residue chain is Lipoxygenase homology domain-containing protein 1 (2068 aa).

15 consecutive PLAT domains span residues 43–160 (KVYE…RDLL), 172–287 (NKYE…RDIL), 296–412 (ITYI…RQLY), 425–540 (YPWS…REMT), 553–673 (ARYR…RELL), 684–803 (FRYH…VELY), 814–934 (VHYE…RELL), 970–1088 (TTFS…RDLF), 1101–1226 (VPYE…RELV), 1255–1373 (VLYS…RLFY), 1422–1540 (IPYY…RVFD), 1553–1668 (VLYE…CEIC), 1680–1798 (TSYT…RDFA), 1811–1932 (TTYE…VFEV), and 1949–2065 (VKYE…RELF).

Expressed in the inner ear, specifically in hair cells. Higher expression is detected in the cochlea.

The protein localises to the cell projection. Its subcellular location is the stereocilium. In terms of biological role, required for normal function of hair cells in the inner ear. The sequence is that of Lipoxygenase homology domain-containing protein 1 (Loxhd1) from Mus musculus (Mouse).